We begin with the raw amino-acid sequence, 335 residues long: Nucleoid-associated protein KPN78578_25800 (335 aa).

Belongs to the YejK family.

It is found in the cytoplasm. The protein resides in the nucleoid. The sequence is that of Nucleoid-associated protein KPN78578_25800 from Klebsiella pneumoniae subsp. pneumoniae (strain ATCC 700721 / MGH 78578).